The sequence spans 329 residues: Probable aryl-alcohol dehydrogenase AAD4 (329 aa).

Residue Y30 is the Proton donor of the active site. Position 105 (H105) interacts with substrate. 190-200 (DVMGGGRFQSK) is an NADP(+) binding site.

The protein belongs to the aldo/keto reductase family. Aldo/keto reductase 2 subfamily.

This Saccharomyces cerevisiae (strain ATCC 204508 / S288c) (Baker's yeast) protein is Probable aryl-alcohol dehydrogenase AAD4 (AAD4).